A 358-amino-acid polypeptide reads, in one-letter code: Heme A synthase (358 aa).

Helical transmembrane passes span 22 to 42 (IQVWLYSILLLCLAIVLVGGA), 107 to 127 (VLGRLVGLVALLGLIWFWATK), 133 to 153 (ILFPLIVVPILIAFQGFIGWW), 172 to 192 (LAFHLITACLVIIFVTYLSRG), 208 to 228 (FAAWLVILVLIEIYLGALVAG), 269 to 289 (FIHRFFAYFLFIVSALHAFYV), 302 to 322 (AFLIFFIIIIQAILGILTLLH), and 324 to 344 (VPISLGLIHQSMALVVLCFAV). Residue histidine 271 coordinates heme. Residue histidine 332 coordinates heme.

This sequence belongs to the COX15/CtaA family. Type 2 subfamily. In terms of assembly, interacts with CtaB. Heme b serves as cofactor.

It is found in the cell membrane. It carries out the reaction Fe(II)-heme o + 2 A + H2O = Fe(II)-heme a + 2 AH2. It participates in porphyrin-containing compound metabolism; heme A biosynthesis; heme A from heme O: step 1/1. Its function is as follows. Catalyzes the conversion of heme O to heme A by two successive hydroxylations of the methyl group at C8. The first hydroxylation forms heme I, the second hydroxylation results in an unstable dihydroxymethyl group, which spontaneously dehydrates, resulting in the formyl group of heme A. This Bartonella tribocorum (strain CIP 105476 / IBS 506) protein is Heme A synthase.